A 212-amino-acid polypeptide reads, in one-letter code: MNSKFIVIEGLEGAGKTTARDTVVATLRAQGINDIVFTREPGGTPLAEKLRDLIKQGIDGEVLTDKAEVLMLYAARVQLVENVIKPALARGSWVVGDRHDLSSQAYQGGGRGIDINLMTSLRDTVLGEFRPDLTLYLDLPPVIGLARARARGELDRIEQESLAFFERTRERYLELAATDSSIKTIDASQPLEQVSESISQVLKQWLTSRETA.

ATP is bound at residue 10–17 (GLEGAGKT).

It belongs to the thymidylate kinase family.

The enzyme catalyses dTMP + ATP = dTDP + ADP. Phosphorylation of dTMP to form dTDP in both de novo and salvage pathways of dTTP synthesis. The polypeptide is Thymidylate kinase (Yersinia enterocolitica serotype O:8 / biotype 1B (strain NCTC 13174 / 8081)).